The sequence spans 376 residues: PqqA peptide cyclase (376 aa).

One can recognise a Radical SAM core domain in the interval 7–222; it reads VGLPLWLLAE…TNEYRDKLKA (216 aa). 3 residues coordinate [4Fe-4S] cluster: cysteine 21, cysteine 25, and cysteine 28.

This sequence belongs to the radical SAM superfamily. PqqE family. In terms of assembly, interacts with PqqD. The interaction is necessary for activity of PqqE. [4Fe-4S] cluster is required as a cofactor.

It carries out the reaction [PQQ precursor protein] + S-adenosyl-L-methionine = E-Y cross-linked-[PQQ precursor protein] + 5'-deoxyadenosine + L-methionine + H(+). It participates in cofactor biosynthesis; pyrroloquinoline quinone biosynthesis. Catalyzes the cross-linking of a glutamate residue and a tyrosine residue in the PqqA protein as part of the biosynthesis of pyrroloquinoline quinone (PQQ). This chain is PqqA peptide cyclase, found in Pseudomonas putida (strain ATCC 47054 / DSM 6125 / CFBP 8728 / NCIMB 11950 / KT2440).